We begin with the raw amino-acid sequence, 138 residues long: MSFYYRRIVHFQDTDAAGVVYFVNVLAICHEAYEASLAAFDINLKVFFSNQEIAIPIIHANVDFRRPMFCGDELTIELMPKTWGDDEFEISYQVFLKEVGKKWAARASTKHVCIHPQSKSRQKLSDEIRRWLLSFQTF.

Asp-15 is an active-site residue.

The protein belongs to the 4-hydroxybenzoyl-CoA thioesterase family. DHNA-CoA hydrolase subfamily.

The catalysed reaction is 1,4-dihydroxy-2-naphthoyl-CoA + H2O = 1,4-dihydroxy-2-naphthoate + CoA + H(+). It functions in the pathway cofactor biosynthesis; phylloquinone biosynthesis. The protein operates within quinol/quinone metabolism; 1,4-dihydroxy-2-naphthoate biosynthesis; 1,4-dihydroxy-2-naphthoate from chorismate: step 7/7. In terms of biological role, catalyzes the hydrolysis of 1,4-dihydroxy-2-naphthoyl-CoA (DHNA-CoA) to 1,4-dihydroxy-2-naphthoate (DHNA), a reaction involved in phylloquinone (vitamin K1) biosynthesis. This chain is 1,4-dihydroxy-2-naphthoyl-CoA hydrolase, found in Trichodesmium erythraeum (strain IMS101).